Reading from the N-terminus, the 310-residue chain is Methionyl-tRNA formyltransferase (310 aa).

Position 110–113 (Ser110–Pro113) interacts with (6S)-5,6,7,8-tetrahydrofolate.

This sequence belongs to the Fmt family.

The enzyme catalyses L-methionyl-tRNA(fMet) + (6R)-10-formyltetrahydrofolate = N-formyl-L-methionyl-tRNA(fMet) + (6S)-5,6,7,8-tetrahydrofolate + H(+). Functionally, attaches a formyl group to the free amino group of methionyl-tRNA(fMet). The formyl group appears to play a dual role in the initiator identity of N-formylmethionyl-tRNA by promoting its recognition by IF2 and preventing the misappropriation of this tRNA by the elongation apparatus. This Halorhodospira halophila (strain DSM 244 / SL1) (Ectothiorhodospira halophila (strain DSM 244 / SL1)) protein is Methionyl-tRNA formyltransferase.